The primary structure comprises 361 residues: Replication-associated protein (361 aa).

Residues 1–31 (MSSLPVSESEGEGSGTSVQVPSRGGQVTPGE) form a disordered region. The region spanning 35-138 (SLRTKHVFLT…PESSWEFGKF (104 aa)) is the CRESS-DNA virus Rep endonuclease domain. The RCR-1 motif lies at 42–45 (FLTY). 3 residues coordinate a divalent metal cation: glutamate 76, histidine 84, and histidine 86. Residues 84–86 (HLH) carry the RCR-2 motif. Tyrosine 124 functions as the For DNA cleavage activity in the catalytic mechanism. Residues 124–127 (YCMK) carry the RCR-3 motif. The tract at residues 192–204 (SANALFPDPPQTY) is oligomerization. 243–250 (GPTRTGKT) is an ATP binding site. The tract at residues 266–285 (VNFLEEWNCQAQFNIIDDIP) is transactivation. The Nuclear localization signal signature appears at 307 to 317 (KYGKKKRIPNG).

The protein belongs to the geminiviridae Rep protein family. In terms of assembly, homooligomer. Rep binds to repeated DNA motifs (iterons). Forms the O-complex, which is a Rep-DNA complex involved in the initiation of RCR. Part of the C- and V-complexes which are RepA-Rep-DNA complexes involved in the c-sense and v-sense transcription. Mg(2+) is required as a cofactor. The cofactor is Mn(2+).

The protein localises to the host nucleus. Its function is as follows. Essential for the replication of viral ssDNA. The closed circular ssDNA genome is first converted to a superhelical dsDNA. Rep binds a specific region at the genome origin of replication. It introduces an endonucleolytic nick within the conserved sequence 5'-TAATATTAC-3' in the intergenic region of the genome present in all geminiviruses, thereby initiating the rolling circle replication (RCR). Following cleavage, binds covalently to the 5'-phosphate of DNA as a tyrosyl ester. The cleavage gives rise to a free 3'-OH that serves as a primer for the cellular DNA polymerase. The polymerase synthesizes the (+) strand DNA by rolling circle mechanism. After one round of replication, a Rep-catalyzed nucleotidyl transfer reaction releases a circular single-stranded virus genome, thereby terminating the replication. Displays origin-specific DNA cleavage, nucleotidyl transferase, ATPase and helicase activities. Acts as an inhibitor of C-sense gene transcription. The chain is Replication-associated protein from Avena sativa (Oat).